We begin with the raw amino-acid sequence, 914 residues long: Probable dipeptidyl-aminopeptidase B (914 aa).

Basic and acidic residues predominate over residues 1-10; that stretch reads MATFSDHETS. The interval 1 to 63 is disordered; it reads MATFSDHETS…TGMDNGDRYR (63 aa). Over 1–91 the chain is Cytoplasmic; the sequence is MATFSDHETS…KAATGGRARR (91 aa). A compositionally biased stretch (low complexity) spans 20–35; the sequence is STSSASQTSSDSGLSS. The span at 45–56 shows a compositional bias: polar residues; that stretch reads QPFSAPNGTTGM. A helical; Signal-anchor for type II membrane protein transmembrane segment spans residues 92 to 112; that stretch reads IFWLLVLLCFGGWLLAFVLFL. Residues 113–914 are Vacuolar-facing; it reads TGGRANYQSA…RFKRSLPVLV (802 aa). N348, N565, and N639 each carry an N-linked (GlcNAc...) asparagine glycan. Residue S753 is the Charge relay system of the active site. An N-linked (GlcNAc...) asparagine glycan is attached at N807. Catalysis depends on charge relay system residues D830 and H863.

This sequence belongs to the peptidase S9B family.

It localises to the vacuole membrane. It catalyses the reaction Release of an N-terminal dipeptide, Xaa-Yaa-|-Zaa-, from a polypeptide, preferentially when Yaa is Pro, provided Zaa is neither Pro nor hydroxyproline.. Functionally, type IV dipeptidyl-peptidase which removes N-terminal dipeptides sequentially from polypeptides having unsubstituted N-termini provided that the penultimate residue is proline. The protein is Probable dipeptidyl-aminopeptidase B (dapB) of Aspergillus clavatus (strain ATCC 1007 / CBS 513.65 / DSM 816 / NCTC 3887 / NRRL 1 / QM 1276 / 107).